The primary structure comprises 406 residues: 3-isopropylmalate dehydrogenase, chloroplastic (406 aa).

The N-terminal 34 residues, 1–34, are a transit peptide targeting the chloroplast; sequence MAAALQTNIRPVKFPATLRALTKQSSPAPFRVRC. A Phosphoserine modification is found at S71. NAD(+) is bound at residue 117-130; that stretch reads GYKWDKNEKHLKPE. Residues R137, R147, R175, and D265 each contribute to the substrate site. The Mg(2+) site is built by D265, D289, and D293. 323-335 serves as a coordination point for NAD(+); the sequence is GSAPDIAGQDKAN.

It belongs to the isocitrate and isopropylmalate dehydrogenases family. Homodimer. Mg(2+) is required as a cofactor. The cofactor is Mn(2+).

The protein localises to the plastid. The protein resides in the chloroplast. It carries out the reaction (2R,3S)-3-isopropylmalate + NAD(+) = 4-methyl-2-oxopentanoate + CO2 + NADH. It participates in amino-acid biosynthesis; L-leucine biosynthesis; L-leucine from 3-methyl-2-oxobutanoate: step 3/4. Functionally, catalyzes the oxidation of 3-carboxy-2-hydroxy-4-methylpentanoate (3-isopropylmalate) to 3-carboxy-4-methyl-2-oxopentanoate. The product decarboxylates to 4-methyl-2 oxopentanoate. This is 3-isopropylmalate dehydrogenase, chloroplastic from Brassica napus (Rape).